Consider the following 375-residue polypeptide: MVEIGMGRTARRTYELEDVTIVPSRRTRSSKDVSTAWQLDAYRFEIPVIAHPTDALVSPEFAIEMGRLGGLGVLNGEGLIGRHADVEEKIAQVVEVAAKEPEPSAAIRLLQQLHAAPLDPDLLGAAVARIREAGVTTAVRVSPQNAQALTPTLVAAGIDLLVIQGTIISAERVASDGEPLNLKTFISELDVPVVAGGVLDHRTALHLMRTGAAGVIVGYGSTSGVTTSDEVLGISVPMATAIADAAAARREYLDETGGRYVHVLADGDIHSSGDLAKAIACGADAVVLGTPLATSAEALGNGWFWPAAAAHPSLPRGALLQVALGERPSLEQVLTGPSDDPFGSLNLVGGLRRSMAKAGYCDLKEFQKVGLTVGS.

An Isoglutamyl lysine isopeptide (Lys-Gln) (interchain with Q-Cter in protein Pup) cross-link involves residue Lys-99.

The protein belongs to the IMPDH/GMPR family.

This is an uncharacterized protein from Mycolicibacterium smegmatis (strain ATCC 700084 / mc(2)155) (Mycobacterium smegmatis).